We begin with the raw amino-acid sequence, 147 residues long: 3-dehydroquinate dehydratase (147 aa).

Tyr-23 acts as the Proton acceptor in catalysis. The substrate site is built by Asn-75, His-81, and Asp-88. The Proton donor role is filled by His-101. Substrate is bound by residues 102–103 and Arg-112; that span reads LS.

Belongs to the type-II 3-dehydroquinase family. Homododecamer.

The enzyme catalyses 3-dehydroquinate = 3-dehydroshikimate + H2O. The protein operates within metabolic intermediate biosynthesis; chorismate biosynthesis; chorismate from D-erythrose 4-phosphate and phosphoenolpyruvate: step 3/7. In terms of biological role, catalyzes a trans-dehydration via an enolate intermediate. This chain is 3-dehydroquinate dehydratase, found in Stenotrophomonas maltophilia (strain K279a).